The sequence spans 257 residues: 1-(5-phosphoribosyl)-5-[(5-phosphoribosylamino)methylideneamino] imidazole-4-carboxamide isomerase (257 aa).

Residue aspartate 8 is the Proton acceptor of the active site. The active-site Proton donor is the aspartate 130.

This sequence belongs to the HisA/HisF family.

It is found in the cytoplasm. It carries out the reaction 1-(5-phospho-beta-D-ribosyl)-5-[(5-phospho-beta-D-ribosylamino)methylideneamino]imidazole-4-carboxamide = 5-[(5-phospho-1-deoxy-D-ribulos-1-ylimino)methylamino]-1-(5-phospho-beta-D-ribosyl)imidazole-4-carboxamide. The protein operates within amino-acid biosynthesis; L-histidine biosynthesis; L-histidine from 5-phospho-alpha-D-ribose 1-diphosphate: step 4/9. In Chlorobium chlorochromatii (strain CaD3), this protein is 1-(5-phosphoribosyl)-5-[(5-phosphoribosylamino)methylideneamino] imidazole-4-carboxamide isomerase.